Here is a 20-residue protein sequence, read N- to C-terminus: Alpha-1B-glycoprotein (20 aa).

The tract at residues alanine 1–proline 20 is disordered.

In terms of assembly, interacts with CRISP3. Glycosylated. Plasma.

Its subcellular location is the secreted. This Equus asinus (Donkey) protein is Alpha-1B-glycoprotein (A1BG).